The chain runs to 533 residues: UDP-glucuronosyltransferase 1-2 (533 aa).

The N-terminal stretch at 1 to 27 (MDTGLCVPLRGISGLLLLLCALPWAEG) is a signal peptide. 3 N-linked (GlcNAc...) asparagine glycosylation sites follow: Asn-141, Asn-295, and Asn-433. The helical transmembrane segment at 491–511 (VIGFLLAIVLTVVFIVFKCCA) threads the bilayer.

It belongs to the UDP-glycosyltransferase family. In terms of tissue distribution, expressed in kidney.

The protein localises to the microsome. The protein resides in the endoplasmic reticulum membrane. It carries out the reaction glucuronate acceptor + UDP-alpha-D-glucuronate = acceptor beta-D-glucuronoside + UDP + H(+). Its function is as follows. UDPGT is of major importance in the conjugation and subsequent elimination of potentially toxic xenobiotics and endogenous compounds. The polypeptide is UDP-glucuronosyltransferase 1-2 (Ugt1a2) (Mus musculus (Mouse)).